We begin with the raw amino-acid sequence, 550 residues long: Membrane protein insertase YidC (550 aa).

A helical membrane pass occupies residues 6 to 26 (LIVFIVLSFGLLFVWQEYFAP). Positions 30 to 59 (PKPVAAAVQPDGTPAPATARPADSPATGKL) are disordered. The next 4 membrane-spanning stretches (helical) occupy residues 360-380 (WGWA…PLSA), 430-450 (LPIV…LASV), 472-492 (ILPA…PPPA), and 504-524 (PLAF…YWLV).

Belongs to the OXA1/ALB3/YidC family. Type 1 subfamily. Interacts with the Sec translocase complex via SecD. Specifically interacts with transmembrane segments of nascent integral membrane proteins during membrane integration.

The protein resides in the cell inner membrane. Required for the insertion and/or proper folding and/or complex formation of integral membrane proteins into the membrane. Involved in integration of membrane proteins that insert both dependently and independently of the Sec translocase complex, as well as at least some lipoproteins. Aids folding of multispanning membrane proteins. The polypeptide is Membrane protein insertase YidC (Laribacter hongkongensis (strain HLHK9)).